The following is a 328-amino-acid chain: Mitochondrial GTPase 1 (328 aa).

Residues 23 to 211 (NKTLKRLKNL…MLDTPGIMTP (189 aa)) enclose the CP-type G domain. GTP is bound by residues 70–73 (NKCD), 155–160 (NTGKSS), and glycine 207.

It belongs to the TRAFAC class YlqF/YawG GTPase family. MTG1 subfamily.

Its subcellular location is the mitochondrion inner membrane. Functionally, mitochondrial GTPase involved in assembly of the large ribosomal subunit. Plays a role in expression of the mitochondrial translational machinery. The polypeptide is Mitochondrial GTPase 1 (mtg1) (Schizosaccharomyces pombe (strain 972 / ATCC 24843) (Fission yeast)).